The sequence spans 231 residues: MNDPKVIVALDYDNLADALAFVDKIDPSTCRLKVGKEMFTLFGPDFVRELHKRGFSVFLDLKFHDIPNTCSKAVKAAAELGVWMVNVHASGGERMMAASREILEPYGKERPLLIGVTVLTSMESADLQGIGILSAPQDHVLRLATLAKNAGLDGVVCSAQEASLLKQHLGREFKLVTPGIRPAGSEQGDQRRIMTPAQAIASGSDYLVIGRPITQAAHPEVVLEEINSSLV.

Substrate-binding positions include D11, K33, 60–69 (DLKFHDIPNT), T120, R181, Q190, G210, and R211. K62 functions as the Proton donor in the catalytic mechanism.

Belongs to the OMP decarboxylase family. Type 1 subfamily. In terms of assembly, homodimer.

The catalysed reaction is orotidine 5'-phosphate + H(+) = UMP + CO2. It participates in pyrimidine metabolism; UMP biosynthesis via de novo pathway; UMP from orotate: step 2/2. Catalyzes the decarboxylation of orotidine 5'-monophosphate (OMP) to uridine 5'-monophosphate (UMP). The polypeptide is Orotidine 5'-phosphate decarboxylase (Vibrio cholerae serotype O1 (strain ATCC 39541 / Classical Ogawa 395 / O395)).